Consider the following 341-residue polypeptide: Ferrochelatase (341 aa).

Fe cation-binding residues include His196 and Glu277.

The protein belongs to the ferrochelatase family.

Its subcellular location is the cytoplasm. The catalysed reaction is heme b + 2 H(+) = protoporphyrin IX + Fe(2+). Its pathway is porphyrin-containing compound metabolism; protoheme biosynthesis; protoheme from protoporphyrin-IX: step 1/1. Functionally, catalyzes the ferrous insertion into protoporphyrin IX. This is Ferrochelatase from Synechococcus sp. (strain JA-3-3Ab) (Cyanobacteria bacterium Yellowstone A-Prime).